The chain runs to 307 residues: Chaperone protein DnaJ 2 (307 aa).

In terms of domain architecture, J spans 6–71 (NYYQILGVPR…TKRRELDSRL (66 aa)). A disordered region spans residues 69–133 (SRLFGRFRRP…TRRTKVVSPA (65 aa)). Residues 88-99 (NGGRSPNGTSVN) show a composition bias toward polar residues. Positions 100–114 (GQVRTPTGRTGTRQP) are enriched in low complexity.

It belongs to the DnaJ family. Homodimer. Zn(2+) serves as cofactor.

It localises to the cytoplasm. In terms of biological role, participates actively in the response to hyperosmotic and heat shock by preventing the aggregation of stress-denatured proteins and by disaggregating proteins, also in an autonomous, DnaK-independent fashion. Unfolded proteins bind initially to DnaJ; upon interaction with the DnaJ-bound protein, DnaK hydrolyzes its bound ATP, resulting in the formation of a stable complex. GrpE releases ADP from DnaK; ATP binding to DnaK triggers the release of the substrate protein, thus completing the reaction cycle. Several rounds of ATP-dependent interactions between DnaJ, DnaK and GrpE are required for fully efficient folding. Also involved, together with DnaK and GrpE, in the DNA replication of plasmids through activation of initiation proteins. This chain is Chaperone protein DnaJ 2 (dnaJ2), found in Synechocystis sp. (strain ATCC 27184 / PCC 6803 / Kazusa).